Reading from the N-terminus, the 292-residue chain is Ribosomal RNA small subunit methyltransferase A (292 aa).

Residues asparagine 28, leucine 30, glycine 55, glutamate 77, aspartate 103, and asparagine 123 each contribute to the S-adenosyl-L-methionine site.

This sequence belongs to the class I-like SAM-binding methyltransferase superfamily. rRNA adenine N(6)-methyltransferase family. RsmA subfamily.

Its subcellular location is the cytoplasm. It catalyses the reaction adenosine(1518)/adenosine(1519) in 16S rRNA + 4 S-adenosyl-L-methionine = N(6)-dimethyladenosine(1518)/N(6)-dimethyladenosine(1519) in 16S rRNA + 4 S-adenosyl-L-homocysteine + 4 H(+). In terms of biological role, specifically dimethylates two adjacent adenosines (A1518 and A1519) in the loop of a conserved hairpin near the 3'-end of 16S rRNA in the 30S particle. May play a critical role in biogenesis of 30S subunits. This Methylobacterium radiotolerans (strain ATCC 27329 / DSM 1819 / JCM 2831 / NBRC 15690 / NCIMB 10815 / 0-1) protein is Ribosomal RNA small subunit methyltransferase A.